Consider the following 726-residue polypeptide: Mitotic spindle checkpoint protein MAD1 (726 aa).

The tract at residues 1–30 (MILRTPQPKRLRSDAGESPFPTGATGSGNQ) is disordered. Coiled-coil stretches lie at residues 68–246 (ADVL…LKLI) and 272–625 (SDNS…VFAD).

Belongs to the MAD1 family. Homodimer. Part of the mitotic checkpoint complex (MCC). Interacts with MAD2 and NUA.

It is found in the nucleus envelope. Functionally, required for the execution of the mitotic checkpoint which monitors the process of kinetochore-spindle attachment and delays the onset of anaphase when this process is not complete. It inhibits the activity of the anaphase promoting complex by sequestering CDC20 until all chromosomes are aligned at the metaphase plate. Required for anchoring MAD2 to the nuclear envelope. The sequence is that of Mitotic spindle checkpoint protein MAD1 from Arabidopsis thaliana (Mouse-ear cress).